The chain runs to 450 residues: Proline--tRNA ligase (450 aa).

It belongs to the class-II aminoacyl-tRNA synthetase family. ProS type 2 subfamily. In terms of assembly, homodimer.

It is found in the cytoplasm. It catalyses the reaction tRNA(Pro) + L-proline + ATP = L-prolyl-tRNA(Pro) + AMP + diphosphate. Catalyzes the attachment of proline to tRNA(Pro) in a two-step reaction: proline is first activated by ATP to form Pro-AMP and then transferred to the acceptor end of tRNA(Pro). In Paracoccus denitrificans (strain Pd 1222), this protein is Proline--tRNA ligase.